A 303-amino-acid chain; its full sequence is Mycothiol acetyltransferase (303 aa).

N-acetyltransferase domains lie at 3–152 (VTVT…VSLP) and 155–303 (VRIR…MYRS). D35 serves as a coordination point for 1D-myo-inositol 2-(L-cysteinylamino)-2-deoxy-alpha-D-glucopyranoside. 79–81 (LTV) is a binding site for acetyl-CoA. 1D-myo-inositol 2-(L-cysteinylamino)-2-deoxy-alpha-D-glucopyranoside contacts are provided by E182, K224, and E237. Acetyl-CoA contacts are provided by residues 241–243 (VGV) and 248–254 (QGSGLGR). Residue Y275 coordinates 1D-myo-inositol 2-(L-cysteinylamino)-2-deoxy-alpha-D-glucopyranoside.

It belongs to the acetyltransferase family. MshD subfamily. In terms of assembly, monomer.

The enzyme catalyses 1D-myo-inositol 2-(L-cysteinylamino)-2-deoxy-alpha-D-glucopyranoside + acetyl-CoA = mycothiol + CoA + H(+). Functionally, catalyzes the transfer of acetyl from acetyl-CoA to desacetylmycothiol (Cys-GlcN-Ins) to form mycothiol. The polypeptide is Mycothiol acetyltransferase (Kocuria rhizophila (strain ATCC 9341 / DSM 348 / NBRC 103217 / DC2201)).